Here is a 133-residue protein sequence, read N- to C-terminus: Salivary cystatin-L (133 aa).

Positions 1 to 19 (MTSSFALVLLLGGVAVCVA) are cleaved as a signal peptide. One can recognise a Cystatin domain in the interval 30–117 (ANHQANPEFL…HRTCTTVVFE (88 aa)). Intrachain disulfides connect cysteine 89–cysteine 100 and cysteine 111–cysteine 130.

Belongs to the cystatin family. In terms of assembly, monomer. Can form homodimers in vitro, but probably not in vivo. Homodimers are predicted to be inactive; dimerization disrupts the interaction with target proteases.

The protein localises to the secreted. Functionally, inhibitor of cysteine proteinases. Inhibits host immune responses via its inhibition of host cathepsins. Contributes to the suppression of the host's immune response to tick salivary proteins and is important for successful feeding on hosts. Inhibits differentiation of host dendritic cells. Inhibits proliferation of host T-cells in response to antigen stimulus. Down-regulates TLR2-mediated host responses to infection by B.burgdorferi and the production of the chemokine CCL3 by host dendritic cells. Down-regulates host responses to infection by B.burgdorferi and the production of IFNB1 by host dendritic cells. Down-regulates IL1B production by host mast cells, and this then leads to impaired activation of IL1R1, resulting in decreased IL9 production. Inhibits host inflammatory reactions and recruitment of host neutrophils. Inhibits papain and cathepsin L (CTSL) (in vitro). Inhibits cathepsin S (CTSS) (in vitro). Inhibits CTSV and CTSC, but to a lesser degree (in vitro). This chain is Salivary cystatin-L, found in Ixodes scapularis (Black-legged tick).